The sequence spans 599 residues: Flap endonuclease GEN-like 1 (599 aa).

An N-domain region spans residues 1-96 (MGVGGNFWDL…ISRFFRSSGI (96 aa)). The tract at residues 2 to 95 (GVGGNFWDLL…RISRFFRSSG (94 aa)) is XPG-N domain. Residues D31, D75, E140, E142, D161, D163, and D213 each contribute to the Mg(2+) site. The tract at residues 128 to 213 (ELLGIPVLKA…IAISLLVGND (86 aa)) is XPG-I domain. Residues 128–217 (ELLGIPVLKA…LLVGNDYDSG (90 aa)) form an I-domain region. The segment at 213-407 (DYDSGGVLGI…LLPMLSTIYL (195 aa)) is 5'-3' exonuclease domain. 2 disordered regions span residues 522–545 (RESK…MGVQ) and 559–599 (AAGQ…LLFG). 2 stretches are compositionally biased toward polar residues: residues 563–572 (SIETGGSSKA) and 580–590 (ATSTSSSNLTK).

It belongs to the XPG/RAD2 endonuclease family. GEN subfamily. Mg(2+) serves as cofactor.

It localises to the nucleus. In terms of biological role, endonuclease which cleaves flap structures at the junction between single-stranded DNA and double-stranded DNA with a specific cleavage site in the 5' overhang strand exactly one nucleotide 3' of the branch point. Structure- and sequence-specific nuclease that resolves holliday junctions (HJs) by symmetrically oriented incisions in two opposing strands near the junction point, thus leading to ligatable products; HJs are physical links between homologous DNA molecules that arise as central intermediary structures during homologous recombination and repair in meiotic and somatic cells. Structure-specific nuclease with 5'-flap endonuclease activity, preferentially cleaving static flaps 5' overhang strand exactly one nucleotide in the 3' direction of the branch point. Also able to cleave double-stranded flap strand 1 exactly at the branch point. In Arabidopsis thaliana (Mouse-ear cress), this protein is Flap endonuclease GEN-like 1.